A 357-amino-acid polypeptide reads, in one-letter code: Golgi to ER traffic protein 2 (357 aa).

The Cytoplasmic segment spans residues 1–224 (MSETTDKQLT…AKYHTYQEQL (224 aa)). The segment covering 65–81 (TDTATVTDSSTNATSVS) has biased composition (low complexity). Residues 65-99 (TDTATVTDSSTNATSVSPSAAKATPTSTGVSSAIS) are disordered. A compositionally biased stretch (polar residues) spans 88-98 (TPTSTGVSSAI). Residues 225 to 245 (WQFRFLVVRILATIFNFAYHF) form a helical membrane-spanning segment. Residues 246 to 270 (ITIPSFTASNHAYVRDLSEVYPLLG) lie on the Lumenal side of the membrane. A helical transmembrane segment spans residues 271–290 (FMTIFTSIEVVIIATYYLLF). The Cytoplasmic segment spans residues 291-334 (TKLGLFHASNQKSFILKGISTLSMFVPQLLRYEPLVATFLGYKE). The helical transmembrane segment at 335 to 355 (LLGIFVGDLSLVVVMFGLLSF) threads the bilayer. The Lumenal segment spans residues 356 to 357 (SN).

The protein belongs to the GET2 family. In terms of assembly, component of the Golgi to ER traffic (GET) complex, which is composed of GET1, GET2 and GET3. Within the complex, GET1 and GET2 form a heterotetramer which is stabilized by phosphatidylinositol binding and which binds to the GET3 homodimer.

It localises to the endoplasmic reticulum membrane. The protein localises to the golgi apparatus membrane. Functionally, required for the post-translational delivery of tail-anchored (TA) proteins to the endoplasmic reticulum. Together with GET1, acts as a membrane receptor for soluble GET3, which recognizes and selectively binds the transmembrane domain of TA proteins in the cytosol. The GET complex cooperates with the HDEL receptor ERD2 to mediate the ATP-dependent retrieval of resident ER proteins that contain a C-terminal H-D-E-L retention signal from the Golgi to the ER. The sequence is that of Golgi to ER traffic protein 2 from Lodderomyces elongisporus (strain ATCC 11503 / CBS 2605 / JCM 1781 / NBRC 1676 / NRRL YB-4239) (Yeast).